An 89-amino-acid chain; its full sequence is Cell division topological specificity factor (89 aa).

It belongs to the MinE family.

Its function is as follows. Prevents the cell division inhibition by proteins MinC and MinD at internal division sites while permitting inhibition at polar sites. This ensures cell division at the proper site by restricting the formation of a division septum at the midpoint of the long axis of the cell. This is Cell division topological specificity factor from Paracoccus denitrificans (strain Pd 1222).